The chain runs to 116 residues: Ribosome-binding factor A (116 aa).

This sequence belongs to the RbfA family. As to quaternary structure, monomer. Binds 30S ribosomal subunits, but not 50S ribosomal subunits or 70S ribosomes.

The protein localises to the cytoplasm. Functionally, one of several proteins that assist in the late maturation steps of the functional core of the 30S ribosomal subunit. Associates with free 30S ribosomal subunits (but not with 30S subunits that are part of 70S ribosomes or polysomes). Required for efficient processing of 16S rRNA. May interact with the 5'-terminal helix region of 16S rRNA. This Streptococcus pneumoniae (strain Hungary19A-6) protein is Ribosome-binding factor A.